The chain runs to 389 residues: Nicotinate phosphoribosyltransferase (389 aa).

At His-211 the chain carries Phosphohistidine; by autocatalysis.

Belongs to the NAPRTase family. In terms of processing, transiently phosphorylated on a His residue during the reaction cycle. Phosphorylation strongly increases the affinity for substrates and increases the rate of nicotinate D-ribonucleotide production. Dephosphorylation regenerates the low-affinity form of the enzyme, leading to product release.

It carries out the reaction nicotinate + 5-phospho-alpha-D-ribose 1-diphosphate + ATP + H2O = nicotinate beta-D-ribonucleotide + ADP + phosphate + diphosphate. Its pathway is cofactor biosynthesis; NAD(+) biosynthesis; nicotinate D-ribonucleotide from nicotinate: step 1/1. In terms of biological role, catalyzes the synthesis of beta-nicotinate D-ribonucleotide from nicotinate and 5-phospho-D-ribose 1-phosphate at the expense of ATP. In Desulforapulum autotrophicum (strain ATCC 43914 / DSM 3382 / VKM B-1955 / HRM2) (Desulfobacterium autotrophicum), this protein is Nicotinate phosphoribosyltransferase.